We begin with the raw amino-acid sequence, 274 residues long: uncharacterized protein (274 aa).

Basic and acidic residues predominate over residues 1–20 (MSLEKSLDEIINERTNGFDH). Disordered regions lie at residues 1 to 63 (MSLE…HDLD), 148 to 217 (NLKG…EDLD), and 230 to 274 (ASTV…MEAV). Basic residues predominate over residues 21 to 44 (KHSRRRGSQNRISKKSRLTYKFKR). Basic and acidic residues predominate over residues 45–63 (ASKEHNSSPDDGPWQHDLD). The RRM domain occupies 85-161 (FGVRVENLHY…SEIQISKKSP (77 aa)). Over residues 148-160 (NLKGSEIQISKKS) the composition is skewed to polar residues. Low complexity-rich tracts occupy residues 181–190 (SSRSNRGFNR) and 200–211 (RSSSKKSSNNSI). Residues 230-245 (ASTVSSHSSQDFTPSI) show a composition bias toward polar residues. Residues 263–274 (LTEEMDLQMEAV) show a composition bias toward acidic residues.

This is an uncharacterized protein from Schizosaccharomyces pombe (strain 972 / ATCC 24843) (Fission yeast).